The following is a 670-amino-acid chain: UvrABC system protein B (670 aa).

Positions 26-183 (EGLENGLAHQ…RRLSELQYSR (158 aa)) constitute a Helicase ATP-binding domain. 39–46 (GVTGSGKT) lines the ATP pocket. Residues 92 to 115 (YYDYYQPEAYVPSSDTFIEKDASV) carry the Beta-hairpin motif. The Helicase C-terminal domain occupies 431 to 597 (QVDDLLSEIR…GLNKKIGDIL (167 aa)). The tract at residues 600 to 620 (GQPSTRGKGKGRGGKVADTNN) is disordered. Residues 630–665 (DQKIRELEAKMYTHAQNLEFEQAAELRDQVHQLRQQ) form the UVR domain.

It belongs to the UvrB family. As to quaternary structure, forms a heterotetramer with UvrA during the search for lesions. Interacts with UvrC in an incision complex.

The protein localises to the cytoplasm. In terms of biological role, the UvrABC repair system catalyzes the recognition and processing of DNA lesions. A damage recognition complex composed of 2 UvrA and 2 UvrB subunits scans DNA for abnormalities. Upon binding of the UvrA(2)B(2) complex to a putative damaged site, the DNA wraps around one UvrB monomer. DNA wrap is dependent on ATP binding by UvrB and probably causes local melting of the DNA helix, facilitating insertion of UvrB beta-hairpin between the DNA strands. Then UvrB probes one DNA strand for the presence of a lesion. If a lesion is found the UvrA subunits dissociate and the UvrB-DNA preincision complex is formed. This complex is subsequently bound by UvrC and the second UvrB is released. If no lesion is found, the DNA wraps around the other UvrB subunit that will check the other stand for damage. This Yersinia enterocolitica serotype O:8 / biotype 1B (strain NCTC 13174 / 8081) protein is UvrABC system protein B.